Consider the following 120-residue polypeptide: Large ribosomal subunit protein eL34 (120 aa).

It belongs to the eukaryotic ribosomal protein eL34 family.

The sequence is that of Large ribosomal subunit protein eL34 (RPL34) from Pisum sativum (Garden pea).